The sequence spans 35 residues: Photosystem II reaction center protein T (35 aa).

The helical transmembrane segment at 3 to 23 (ALVYTFLLVSTLGIIFFAIFF) threads the bilayer.

It belongs to the PsbT family. PSII is composed of 1 copy each of membrane proteins PsbA, PsbB, PsbC, PsbD, PsbE, PsbF, PsbH, PsbI, PsbJ, PsbK, PsbL, PsbM, PsbT, PsbY, PsbZ, Psb30/Ycf12, at least 3 peripheral proteins of the oxygen-evolving complex and a large number of cofactors. It forms dimeric complexes.

The protein resides in the plastid. It is found in the chloroplast thylakoid membrane. Found at the monomer-monomer interface of the photosystem II (PS II) dimer, plays a role in assembly and dimerization of PSII. PSII is a light-driven water plastoquinone oxidoreductase, using light energy to abstract electrons from H(2)O, generating a proton gradient subsequently used for ATP formation. The chain is Photosystem II reaction center protein T from Bassia hyssopifolia (Fivehorn smotherweed).